A 228-amino-acid chain; its full sequence is Histone H1-III (228 aa).

Low complexity predominate over residues 1-18 (MSDPAPEVASAVPVASPA). 2 disordered regions span residues 1–44 (MSDP…PPVS) and 98–228 (LQTK…AKKA). Residues 39 to 113 (THPPVSEMVV…GASGSFKLPA (75 aa)) form the H15 domain. Residues 115–133 (AKKEKVAKTPKKAAGEKKP) are compositionally biased toward basic and acidic residues. 2 stretches are compositionally biased toward basic residues: residues 148–170 (SIAKKPKAATATKVKKPVAKSTK) and 178–209 (AAKKAAPKPKAAPKPKAATKPKKEVKPKKVAA). Over residues 211-221 (KPAEKKPEAAK) the composition is skewed to basic and acidic residues.

The protein belongs to the histone H1/H5 family.

The protein localises to the nucleus. It localises to the chromosome. Histones H1 are necessary for the condensation of nucleosome chains into higher-order structures. The sequence is that of Histone H1-III from Glyptotendipes barbipes (Midge).